We begin with the raw amino-acid sequence, 116 residues long: Large ribosomal subunit protein bL19 (116 aa).

Belongs to the bacterial ribosomal protein bL19 family.

This protein is located at the 30S-50S ribosomal subunit interface and may play a role in the structure and function of the aminoacyl-tRNA binding site. This Pseudomonas putida (strain W619) protein is Large ribosomal subunit protein bL19.